We begin with the raw amino-acid sequence, 387 residues long: 1-deoxy-D-xylulose 5-phosphate reductoisomerase (387 aa).

Threonine 10, glycine 11, isoleucine 13, asparagine 38, and asparagine 122 together coordinate NADPH. 1-deoxy-D-xylulose 5-phosphate is bound at residue lysine 123. An NADPH-binding site is contributed by glutamate 124. Aspartate 148 lines the Mn(2+) pocket. The 1-deoxy-D-xylulose 5-phosphate site is built by serine 149, glutamate 150, serine 174, and histidine 197. Mn(2+) is bound at residue glutamate 150. Glycine 203 contributes to the NADPH binding site. 1-deoxy-D-xylulose 5-phosphate is bound by residues serine 210, asparagine 215, lysine 216, and glutamate 219. Glutamate 219 lines the Mn(2+) pocket.

This sequence belongs to the DXR family. Mg(2+) serves as cofactor. The cofactor is Mn(2+).

It carries out the reaction 2-C-methyl-D-erythritol 4-phosphate + NADP(+) = 1-deoxy-D-xylulose 5-phosphate + NADPH + H(+). Its pathway is isoprenoid biosynthesis; isopentenyl diphosphate biosynthesis via DXP pathway; isopentenyl diphosphate from 1-deoxy-D-xylulose 5-phosphate: step 1/6. In terms of biological role, catalyzes the NADPH-dependent rearrangement and reduction of 1-deoxy-D-xylulose-5-phosphate (DXP) to 2-C-methyl-D-erythritol 4-phosphate (MEP). The polypeptide is 1-deoxy-D-xylulose 5-phosphate reductoisomerase (Ehrlichia ruminantium (strain Welgevonden)).